The sequence spans 405 residues: Replication factor C large subunit (405 aa).

ATP is bound at residue 47–54 (GPPGVGKT).

This sequence belongs to the activator 1 small subunits family. RfcL subfamily. Heteropentamer composed of four small subunits (RfcS) and one large subunit (RfcL). Probably interacts with PCNA subunit PCNA3.

In terms of biological role, part of the RFC clamp loader complex which loads the PCNA sliding clamp onto DNA. The complex possesses DNA-dependent ATPase activity. This is Replication factor C large subunit (rfcL) from Saccharolobus solfataricus (strain ATCC 35092 / DSM 1617 / JCM 11322 / P2) (Sulfolobus solfataricus).